The following is a 105-amino-acid chain: Flower-specific defensin (105 aa).

The N-terminal stretch at 1-25 (MARSLCFMAFAILAMMLFVAYEVQA) is a signal peptide. 4 cysteine pairs are disulfide-bonded: C28–C72, C39–C59, C45–C66, and C49–C68. Positions 73–105 (VFDEKMTKTGAEILAEEAKTLAAALLEEEIMDN) are cleaved as a propeptide — removed in mature form.

The protein belongs to the DEFL family. Most abundant in the epidermal cell layers of the petals and sepals, within the connective cells of the anthers, and the cortical cells of the style. Not detected in the tapetum, pollen mother cells, the transmitting tissue, the vascular bundles of the anther and style or in leaves. Expressed also in ovaries, but barley detectable in roots.

Its subcellular location is the secreted. The protein localises to the vacuole. Plant defense peptide with antifungal activity against F.oxysporum and B.cinerea. Retards the growth of the Lepidopteran insect pests H.armigera and H.punctigera. In Nicotiana alata (Winged tobacco), this protein is Flower-specific defensin (D1).